Reading from the N-terminus, the 414-residue chain is CCA-adding enzyme (414 aa).

G8 and R11 together coordinate ATP. Positions 8 and 11 each coordinate CTP. Residues D21 and D23 each contribute to the Mg(2+) site. ATP-binding residues include R92, R138, and R141. CTP is bound by residues R92, R138, and R141.

It belongs to the tRNA nucleotidyltransferase/poly(A) polymerase family. Bacterial CCA-adding enzyme type 2 subfamily. The cofactor is Mg(2+).

It catalyses the reaction a tRNA precursor + 2 CTP + ATP = a tRNA with a 3' CCA end + 3 diphosphate. The enzyme catalyses a tRNA with a 3' CCA end + 2 CTP + ATP = a tRNA with a 3' CCACCA end + 3 diphosphate. In terms of biological role, catalyzes the addition and repair of the essential 3'-terminal CCA sequence in tRNAs without using a nucleic acid template. Adds these three nucleotides in the order of C, C, and A to the tRNA nucleotide-73, using CTP and ATP as substrates and producing inorganic pyrophosphate. tRNA 3'-terminal CCA addition is required both for tRNA processing and repair. Also involved in tRNA surveillance by mediating tandem CCA addition to generate a CCACCA at the 3' terminus of unstable tRNAs. While stable tRNAs receive only 3'-terminal CCA, unstable tRNAs are marked with CCACCA and rapidly degraded. In Buchnera aphidicola subsp. Cinara cedri (strain Cc), this protein is CCA-adding enzyme.